The chain runs to 200 residues: Small ribosomal subunit protein uS4c (200 aa).

Residues M91–N154 form the S4 RNA-binding domain.

Belongs to the universal ribosomal protein uS4 family. Part of the 30S ribosomal subunit. Contacts protein S5. The interaction surface between S4 and S5 is involved in control of translational fidelity.

The protein resides in the plastid. It is found in the chloroplast. Its function is as follows. One of the primary rRNA binding proteins, it binds directly to 16S rRNA where it nucleates assembly of the body of the 30S subunit. Functionally, with S5 and S12 plays an important role in translational accuracy. This Oltmannsiellopsis viridis (Marine flagellate) protein is Small ribosomal subunit protein uS4c (rps4).